Reading from the N-terminus, the 78-residue chain is Conotoxin 6 (78 aa).

A signal peptide spans 1–22 (MKLTCMMIVAVLFLTAWIFITA). The propeptide occupies 23-51 (DNSRNGIENLPRMRRHEMKNPKASKLNKR). Disulfide bonds link Cys-53/Cys-69, Cys-60/Cys-73, and Cys-68/Cys-77.

The protein belongs to the conotoxin O1 superfamily. As to expression, expressed by the venom duct.

Its subcellular location is the secreted. This Conus imperialis (Imperial cone) protein is Conotoxin 6.